Consider the following 358-residue polypeptide: Golgi-resident adenosine 3',5'-bisphosphate 3'-phosphatase (358 aa).

Methionine 1 bears the N-acetylmethionine mark. Residues 1 to 12 (MAPMGIRLSPLG) lie on the Cytoplasmic side of the membrane. Residues 13–33 (VAVFCLLGLGVLYHLYSGFLA) traverse the membrane as a helical segment. The Lumenal segment spans residues 34–358 (GRFSLFGLGG…KLPDLEKMGH (325 aa)). Positions 85–106 (RESNVLHEKSKGKTREGADDKM) are disordered. The active-site Proton acceptor is the aspartate 110. Positions 133, 174, 176, and 177 each coordinate Mg(2+). Catalysis depends on threonine 179, which acts as the Proton acceptor. 2 residues coordinate AMP: serine 242 and histidine 245. A glycan (N-linked (GlcNAc...) asparagine) is linked at asparagine 259. AMP is bound by residues glycine 268 and lysine 272. Residue aspartate 300 coordinates Mg(2+).

The protein belongs to the inositol monophosphatase superfamily. Mg(2+) serves as cofactor. Contains N-linked glycan resistant to endoglycosydase H.

The protein resides in the golgi apparatus. The protein localises to the trans-Golgi network membrane. The catalysed reaction is adenosine 3',5'-bisphosphate + H2O = AMP + phosphate. Its pathway is sulfur metabolism. Its activity is regulated as follows. Strongly inhibited by lithium. Functionally, exhibits 3'-nucleotidase activity toward adenosine 3',5'-bisphosphate (PAP), namely hydrolyzes adenosine 3',5'-bisphosphate into adenosine 5'-monophosphate (AMP) and a phosphate. May play a role in the formation of skeletal elements derived through endochondral ossification, possibly by clearing adenosine 3',5'-bisphosphate produced by Golgi sulfotransferases during glycosaminoglycan sulfation. Has no activity toward 3'-phosphoadenosine 5'-phosphosulfate (PAPS) or inositol phosphate (IP) substrates including I(1)P, I(1,4)P2, I(1,3,4)P3, I(1,4,5)P3 and I(1,3,4,5)P4. The protein is Golgi-resident adenosine 3',5'-bisphosphate 3'-phosphatase (BPNT2) of Callithrix jacchus (White-tufted-ear marmoset).